The primary structure comprises 224 residues: Type VII secretion system protein EsaE (224 aa).

As to quaternary structure, interacts with EssD.

In terms of biological role, component of the type VII secretion system (Ess). Plays a role in Esx protein secretion. Plays an essential role in the processing and secretion of EssD. This is Type VII secretion system protein EsaE from Staphylococcus aureus (strain USA300).